A 129-amino-acid chain; its full sequence is Small ribosomal subunit protein uS11 (129 aa).

The protein belongs to the universal ribosomal protein uS11 family. Part of the 30S ribosomal subunit. Interacts with proteins S7 and S18. Binds to IF-3.

In terms of biological role, located on the platform of the 30S subunit, it bridges several disparate RNA helices of the 16S rRNA. Forms part of the Shine-Dalgarno cleft in the 70S ribosome. This is Small ribosomal subunit protein uS11 from Geobacillus kaustophilus (strain HTA426).